A 100-amino-acid polypeptide reads, in one-letter code: Replication restart protein PriB (100 aa).

In terms of domain architecture, SSB spans M1–K99.

This sequence belongs to the PriB family. Homodimer. Interacts with PriA and DnaT. Component of the replication restart primosome. Primosome assembly occurs via a 'hand-off' mechanism. PriA binds to replication forks, subsequently PriB then DnaT bind; DnaT then displaces ssDNA to generate the helicase loading substrate.

Involved in the restart of stalled replication forks, which reloads the replicative helicase on sites other than the origin of replication; the PriA-PriB pathway is the major replication restart pathway. During primosome assembly it facilitates complex formation between PriA and DnaT on DNA; stabilizes PriA on DNA. Stimulates the DNA unwinding activity of PriA helicase. The sequence is that of Replication restart protein PriB from Neisseria meningitidis serogroup A / serotype 4A (strain DSM 15465 / Z2491).